The following is a 264-amino-acid chain: Short-chain dehydrogenase/reductase ucsE (264 aa).

Residues 13–32 (LVVVVGGTSGLGFAVAQAAV) traverse the membrane as a helical segment. Residues Leu23, Ser43, and Asp74 each contribute to the NADP(+) site. Asn125 is a glycosylation site (N-linked (GlcNAc...) asparagine). NADP(+)-binding residues include Arg130 and Lys139. Ser157 (proton donor) is an active-site residue. NADP(+) contacts are provided by Val202 and Thr204.

It belongs to the short-chain dehydrogenases/reductases (SDR) family. NADP(+) serves as cofactor.

It localises to the membrane. It participates in mycotoxin biosynthesis. Its function is as follows. Short-chain dehydrogenase/reductase; part of the gene cluster that mediates the biosynthesis of UCS1025A, a member of the pyrrolizidinone family that acts as a strong telomerase inhibitor and displays potent antibacterial and antitumor properties. These compounds share a hemiaminal-containing pyrrolizidinone core fused with a gamma-lactone, giving a furopyrrolizidine that is connected to a decalin fragment. The polyketide synthase module (PKS) of the PKS-NRPS ucsA is responsible for the synthesis of the polyketide backbone via the condensation of an acetyl-CoA starter unit with 6 malonyl-CoA units. The downstream nonribosomal peptide synthetase (NRPS) module then amidates the carboxyl end of the polyketide with a 2S,3S-methylproline derived from L-isoleucine by the 2-oxoglutarate-dependent dioxygenase ucsF which converts L-isoleucine to (4S,5S)-4-methylpyrroline-5-carboxylate that is further converted to 2S,3S-methylproline by the pyrroline-5-carboxylate reductase ucsG. Reductive release of the completed aminoacyl polyketide from the assembly line can form the 3-pyrrolin-2-one structure via an intramolecular Knoevenagel reaction. Because ucsA lacks a designated enoylreductase (ER) domain, the required activity is provided the enoyl reductase ucsL. This keto acyclic precursor is the substrate of the Diels-Alderase ucsH, that catalyzes the Diels-Alder cycloaddition. Oxidation of the 3S-methyl group to a carboxylate by the cytochrome P450 monooxygenase ucsK allows an oxa-Michael cyclization that might involve the reductase/dehydrogenase ucsI and which furnishes the furopyrrolizidine. The oxidase ucsJ likely plays a critical role in stereoselective reduction of the C5-C6 double bond to afford the required R-configured carboxylate group. Further enolization and oxidation at C5 by an unidentified enzyme affords the last intermediate that can undergo oxa-Michael cyclization to yield UCS1025A. This chain is Short-chain dehydrogenase/reductase ucsE, found in Acremonium sp.